The chain runs to 105 residues: MILLKLYLTLAAILCQSRGTTSLDLDDLMTTNPEIQNEIINKHNDLRRTVDPPAKNMLKMSWGQHHCRECQTCSTEMQPKMSTHPVSGRKIGWVWVCGGKLLHVK.

Positions 1–22 are cleaved as a signal peptide; it reads MILLKLYLTLAAILCQSRGTTS.

The protein belongs to the CRISP family. Contains 8 disulfide bonds. As to expression, expressed by the venom gland.

The protein localises to the secreted. Its function is as follows. Blocks ryanodine receptors, and potassium channels. This is Cysteine-rich venom protein VAR2 from Varanus acanthurus (Ridge-tailed monitor).